The primary structure comprises 78 residues: Large ribosomal subunit protein bL28 (78 aa).

A disordered region spans residues 1–21; the sequence is MSKVCQVTGKRPITGHNVSHA.

Belongs to the bacterial ribosomal protein bL28 family.

The protein is Large ribosomal subunit protein bL28 of Cellvibrio japonicus (strain Ueda107) (Pseudomonas fluorescens subsp. cellulosa).